The following is a 146-amino-acid chain: Large ribosomal subunit protein uL15 (146 aa).

The interval 1–54 (MKLHELQPAAGSRKAPKRVGRGTGSGLGRNAGKGEKGQNARSGGGVRPGFEGGQ) is disordered. Composition is skewed to gly residues over residues 21 to 31 (RGTGSGLGRNA) and 42 to 52 (SGGGVRPGFEG).

This sequence belongs to the universal ribosomal protein uL15 family. As to quaternary structure, part of the 50S ribosomal subunit.

In terms of biological role, binds to the 23S rRNA. The polypeptide is Large ribosomal subunit protein uL15 (Clostridium botulinum (strain Eklund 17B / Type B)).